The primary structure comprises 173 residues: MKSFIEVAKPVVDSGIYMCAKFDQASCEALAQVQKLLGVENPVSAEKLHTTIVYSRKTVDLFPASGISEPARLVDVEKWDTKYGNTIVGVLESDYLHSRFNDAMDAGATYDFDNYKPHVTLAYDSRIEDISGVKRLLTLPVDLTIIKEDAESLDLDKTVEDITEHIEHRGESS.

Residue tyrosine 17 coordinates 3',3'-cGAMP. Tyrosine 17 is a 3',3'-cUAMP binding site. Catalysis depends on residues histidine 49, threonine 51, histidine 118, and threonine 120. Glutamate 151 lines the 3',3'-cGAMP pocket. Glutamate 151 is a 3',3'-cUAMP binding site.

This sequence belongs to the anti-CBASS protein Acb1 family.

The catalysed reaction is 3',3'-cUAMP + H2O = U[3'-5']pAp[3'] + H(+). It catalyses the reaction 3',3',3'-c-tri-AMP + H2O = A[3'-5']pA[3'-5']pAp[3'] + H(+). The enzyme catalyses 3',3',3'-cAAG + H2O = G[3'-5']pA[3'-5']pAp[3'] + H(+). It carries out the reaction 3',3',3'-cAAG + H2O = A[3'-5']pG[3'-5']pAp[3'] + H(+). The catalysed reaction is 3',3'-cGAMP + H2O = G[3'-5']pAp[3'] + H(+). Functionally, counteracts the host CBASS antiviral defense system. Phosphodiesterase that enables metal-independent hydrolysis of the host cyclic di- and trinucleotide CBASS signals such as 3'3'-cGAMP, 3'3'cUA, and 3'3'3'-cAAA. Does not cleave cGG or cA4. Besides evasion of the CBASS system, might also enable evasion of the type III CRISPR systems that use cA3 signals. This is Anti-CBASS protein Acb1 from Escherichia phage RB16.